The primary structure comprises 567 residues: Berberine bridge enzyme-like D-1 (567 aa).

An N-terminal signal peptide occupies residues 1–33 (MKRNISMFLQLLLIILMMISFLFTSLLVPSVSA). Cysteine 42 and cysteine 103 form a disulfide bridge. The N-linked (GlcNAc...) asparagine glycan is linked to asparagine 50. One can recognise an FAD-binding PCMH-type domain in the interval 81–257 (SKPKPTVIIV…YAWKIRLLKV (177 aa)). Pros-8alpha-FAD histidine is present on histidine 118. N-linked (GlcNAc...) asparagine glycosylation is found at asparagine 364 and asparagine 378.

This sequence belongs to the oxygen-dependent FAD-linked oxidoreductase family. FAD serves as cofactor. Mostly expressed in roots at low levels.

The protein localises to the vacuole. It participates in alkaloid biosynthesis; nicotine biosynthesis. In terms of biological role, involved in the biosynthesis of pyridine alkaloid natural products, leading mainly to the production of anabasine, anatabine, nicotine and nornicotine, effective deterrents against herbivores with antiparasitic and pesticide properties (neurotoxins); nornicotine serves as the precursor in the synthesis of the carcinogen compound N'-nitrosonornicotine (NNN). Catalyzes a late oxidation step subsequent to the pyridine ring condensation reaction in the biosynthesis of alkaloids. This Nicotiana tabacum (Common tobacco) protein is Berberine bridge enzyme-like D-1.